Here is a 31-residue protein sequence, read N- to C-terminus: Photosystem II reaction center protein T (31 aa).

Residues 3–23 traverse the membrane as a helical segment; that stretch reads SVAYIIVLAMALSVLFFAIAF.

This sequence belongs to the PsbT family. In terms of assembly, PSII is composed of 1 copy each of membrane proteins PsbA, PsbB, PsbC, PsbD, PsbE, PsbF, PsbH, PsbI, PsbJ, PsbK, PsbL, PsbM, PsbT, PsbX, PsbY, PsbZ, Psb30/Ycf12, peripheral proteins PsbO, CyanoQ (PsbQ), PsbU, PsbV and a large number of cofactors. It forms dimeric complexes.

The protein localises to the cellular thylakoid membrane. Functionally, found at the monomer-monomer interface of the photosystem II (PS II) dimer, plays a role in assembly and dimerization of PSII. PSII is a light-driven water plastoquinone oxidoreductase, using light energy to abstract electrons from H(2)O, generating a proton gradient subsequently used for ATP formation. This chain is Photosystem II reaction center protein T, found in Picosynechococcus sp. (strain ATCC 27264 / PCC 7002 / PR-6) (Agmenellum quadruplicatum).